The following is a 137-amino-acid chain: Leaf-specific thionin DB4 (137 aa).

Positions 1–28 are cleaved as a signal peptide; sequence MAPSKSIKSVVICVLILGLVLEQVQVEG. Disulfide bonds link C31/C68, C32/C60, C40/C58, and C44/C54. A propeptide spans 75-137 (acidic domain); the sequence is LNLLPESGEP…DGAVIQSVEA (63 aa).

Belongs to the plant thionin (TC 1.C.44) family. 4 C-C subfamily.

The protein localises to the secreted. Its function is as follows. Thionins are small plant proteins which are toxic to animal cells. They seem to exert their toxic effect at the level of the cell membrane. Their precise function is not known. The sequence is that of Leaf-specific thionin DB4 (THI1.3) from Hordeum vulgare (Barley).